The chain runs to 277 residues: Phosphonates import ATP-binding protein PhnC 2 (277 aa).

The 249-residue stretch at 3 to 251 (ISLNGISVQH…LLQALYAQHL (249 aa)) folds into the ABC transporter domain. 40 to 47 (GPSGAGKT) is an ATP binding site.

This sequence belongs to the ABC transporter superfamily. Phosphonates importer (TC 3.A.1.9.1) family. As to quaternary structure, the complex is composed of two ATP-binding proteins (PhnC), two transmembrane proteins (PhnE) and a solute-binding protein (PhnD).

It is found in the cell inner membrane. The enzyme catalyses phosphonate(out) + ATP + H2O = phosphonate(in) + ADP + phosphate + H(+). Part of the ABC transporter complex PhnCDE involved in phosphonates import. Responsible for energy coupling to the transport system. The protein is Phosphonates import ATP-binding protein PhnC 2 of Albidiferax ferrireducens (strain ATCC BAA-621 / DSM 15236 / T118) (Rhodoferax ferrireducens).